We begin with the raw amino-acid sequence, 128 residues long: Large ribosomal subunit protein uL22 (128 aa).

This sequence belongs to the universal ribosomal protein uL22 family. As to quaternary structure, part of the 50S ribosomal subunit.

In terms of biological role, this protein binds specifically to 23S rRNA; its binding is stimulated by other ribosomal proteins, e.g. L4, L17, and L20. It is important during the early stages of 50S assembly. It makes multiple contacts with different domains of the 23S rRNA in the assembled 50S subunit and ribosome. The globular domain of the protein is located near the polypeptide exit tunnel on the outside of the subunit, while an extended beta-hairpin is found that lines the wall of the exit tunnel in the center of the 70S ribosome. The sequence is that of Large ribosomal subunit protein uL22 from Prochlorococcus marinus (strain MIT 9515).